The following is a 76-amino-acid chain: uncharacterized protein (76 aa).

The protein to M.jannaschii MJ0857 N-terminal region.

This is an uncharacterized protein from Methanocaldococcus jannaschii (strain ATCC 43067 / DSM 2661 / JAL-1 / JCM 10045 / NBRC 100440) (Methanococcus jannaschii).